We begin with the raw amino-acid sequence, 267 residues long: 4-hydroxy-tetrahydrodipicolinate reductase (267 aa).

Residues 8 to 13 (GAAGRM), Glu-34, 98 to 100 (GST), and 122 to 125 (APNM) contribute to the NAD(+) site. Residue His-155 is the Proton donor/acceptor of the active site. Residue His-156 participates in (S)-2,3,4,5-tetrahydrodipicolinate binding. Residue Lys-159 is the Proton donor of the active site. 165–166 (GT) contacts (S)-2,3,4,5-tetrahydrodipicolinate.

Belongs to the DapB family.

The protein resides in the cytoplasm. The enzyme catalyses (S)-2,3,4,5-tetrahydrodipicolinate + NAD(+) + H2O = (2S,4S)-4-hydroxy-2,3,4,5-tetrahydrodipicolinate + NADH + H(+). It carries out the reaction (S)-2,3,4,5-tetrahydrodipicolinate + NADP(+) + H2O = (2S,4S)-4-hydroxy-2,3,4,5-tetrahydrodipicolinate + NADPH + H(+). Its pathway is amino-acid biosynthesis; L-lysine biosynthesis via DAP pathway; (S)-tetrahydrodipicolinate from L-aspartate: step 4/4. Catalyzes the conversion of 4-hydroxy-tetrahydrodipicolinate (HTPA) to tetrahydrodipicolinate. This chain is 4-hydroxy-tetrahydrodipicolinate reductase, found in Syntrophotalea carbinolica (strain DSM 2380 / NBRC 103641 / GraBd1) (Pelobacter carbinolicus).